The primary structure comprises 180 residues: ATP-dependent protease subunit HslV (180 aa).

Thr7 is an active-site residue. The Na(+) site is built by Ala165, Cys168, and Thr171.

The protein belongs to the peptidase T1B family. HslV subfamily. In terms of assembly, a double ring-shaped homohexamer of HslV is capped on each side by a ring-shaped HslU homohexamer. The assembly of the HslU/HslV complex is dependent on binding of ATP.

The protein resides in the cytoplasm. The enzyme catalyses ATP-dependent cleavage of peptide bonds with broad specificity.. With respect to regulation, allosterically activated by HslU binding. In terms of biological role, protease subunit of a proteasome-like degradation complex believed to be a general protein degrading machinery. This chain is ATP-dependent protease subunit HslV, found in Geobacillus sp. (strain WCH70).